A 66-amino-acid chain; its full sequence is Large ribosomal subunit protein uL30 (66 aa).

This sequence belongs to the universal ribosomal protein uL30 family. Part of the 50S ribosomal subunit.

The protein is Large ribosomal subunit protein uL30 of Brucella anthropi (strain ATCC 49188 / DSM 6882 / CCUG 24695 / JCM 21032 / LMG 3331 / NBRC 15819 / NCTC 12168 / Alc 37) (Ochrobactrum anthropi).